The chain runs to 545 residues: Chaperonin GroEL (545 aa).

Residues 30–33, K51, 87–91, G415, 479–481, and D495 contribute to the ATP site; these read TLGP, DGTTT, and NAA.

This sequence belongs to the chaperonin (HSP60) family. In terms of assembly, forms a cylinder of 14 subunits composed of two heptameric rings stacked back-to-back. Interacts with the co-chaperonin GroES.

Its subcellular location is the cytoplasm. It carries out the reaction ATP + H2O + a folded polypeptide = ADP + phosphate + an unfolded polypeptide.. Functionally, together with its co-chaperonin GroES, plays an essential role in assisting protein folding. The GroEL-GroES system forms a nano-cage that allows encapsulation of the non-native substrate proteins and provides a physical environment optimized to promote and accelerate protein folding. The chain is Chaperonin GroEL from Cellvibrio japonicus (strain Ueda107) (Pseudomonas fluorescens subsp. cellulosa).